We begin with the raw amino-acid sequence, 398 residues long: Argininosuccinate synthase (398 aa).

A8–S16 serves as a coordination point for ATP. Y87 lines the L-citrulline pocket. Residue G117 participates in ATP binding. L-aspartate is bound by residues T119, N123, and D124. Residue N123 participates in L-citrulline binding. Residues R127, S175, E260, and Y272 each coordinate L-citrulline.

Belongs to the argininosuccinate synthase family. Type 1 subfamily. In terms of assembly, homotetramer.

It localises to the cytoplasm. It catalyses the reaction L-citrulline + L-aspartate + ATP = 2-(N(omega)-L-arginino)succinate + AMP + diphosphate + H(+). It participates in amino-acid biosynthesis; L-arginine biosynthesis; L-arginine from L-ornithine and carbamoyl phosphate: step 2/3. In Mycobacterium marinum (strain ATCC BAA-535 / M), this protein is Argininosuccinate synthase.